Reading from the N-terminus, the 310-residue chain is GMP synthase [glutamine-hydrolyzing] subunit B (310 aa).

The 184-residue stretch at 2–185 (FKTEPFIEES…LGLPDQIAHR (184 aa)) folds into the GMPS ATP-PPase domain. ATP is bound at residue 29–35 (SGGVDSA).

Heterodimer composed of a glutamine amidotransferase subunit (A) and a GMP-binding subunit (B).

The catalysed reaction is XMP + L-glutamine + ATP + H2O = GMP + L-glutamate + AMP + diphosphate + 2 H(+). It functions in the pathway purine metabolism; GMP biosynthesis; GMP from XMP (L-Gln route): step 1/1. Functionally, catalyzes the synthesis of GMP from XMP. In Methanococcus maripaludis (strain DSM 14266 / JCM 13030 / NBRC 101832 / S2 / LL), this protein is GMP synthase [glutamine-hydrolyzing] subunit B.